We begin with the raw amino-acid sequence, 212 residues long: 3-demethoxyubiquinol 3-hydroxylase (212 aa).

The segment at 21–42 (SRMSRPLPVPQESAVTEAAPEL) is disordered. Fe cation is bound by residues E61, E91, H94, E143, E175, and H178.

The protein belongs to the COQ7 family. It depends on Fe cation as a cofactor.

Its subcellular location is the cell membrane. It catalyses the reaction a 5-methoxy-2-methyl-3-(all-trans-polyprenyl)benzene-1,4-diol + AH2 + O2 = a 3-demethylubiquinol + A + H2O. Its pathway is cofactor biosynthesis; ubiquinone biosynthesis. Functionally, catalyzes the hydroxylation of 2-nonaprenyl-3-methyl-6-methoxy-1,4-benzoquinol during ubiquinone biosynthesis. This chain is 3-demethoxyubiquinol 3-hydroxylase, found in Paraburkholderia xenovorans (strain LB400).